The chain runs to 435 residues: NADH-quinone oxidoreductase subunit D (435 aa).

The protein belongs to the complex I 49 kDa subunit family. NDH-1 is composed of 14 different subunits. Subunits NuoB, C, D, E, F, and G constitute the peripheral sector of the complex.

The protein localises to the cell inner membrane. The catalysed reaction is a quinone + NADH + 5 H(+)(in) = a quinol + NAD(+) + 4 H(+)(out). In terms of biological role, NDH-1 shuttles electrons from NADH, via FMN and iron-sulfur (Fe-S) centers, to quinones in the respiratory chain. The immediate electron acceptor for the enzyme in this species is believed to be ubiquinone. Couples the redox reaction to proton translocation (for every two electrons transferred, four hydrogen ions are translocated across the cytoplasmic membrane), and thus conserves the redox energy in a proton gradient. This chain is NADH-quinone oxidoreductase subunit D, found in Xanthomonas axonopodis pv. citri (strain 306).